The chain runs to 433 residues: ATP-dependent protease ATPase subunit HslU (433 aa).

ATP-binding positions include Ile-18, 60–65 (GVGKTE), Asp-246, Glu-311, and Arg-383.

Belongs to the ClpX chaperone family. HslU subfamily. In terms of assembly, a double ring-shaped homohexamer of HslV is capped on each side by a ring-shaped HslU homohexamer. The assembly of the HslU/HslV complex is dependent on binding of ATP.

It is found in the cytoplasm. ATPase subunit of a proteasome-like degradation complex; this subunit has chaperone activity. The binding of ATP and its subsequent hydrolysis by HslU are essential for unfolding of protein substrates subsequently hydrolyzed by HslV. HslU recognizes the N-terminal part of its protein substrates and unfolds these before they are guided to HslV for hydrolysis. This chain is ATP-dependent protease ATPase subunit HslU, found in Cereibacter sphaeroides (strain ATCC 17029 / ATH 2.4.9) (Rhodobacter sphaeroides).